The primary structure comprises 365 residues: uncharacterized protein (365 aa).

Composition is skewed to basic and acidic residues over residues 1–27 and 315–339; these read MDNVQEHDPDTQEHNNETQNHKQEDHS and AKDDEQYAKRLAKEEEERGKKETPK. Disordered stretches follow at residues 1–31 and 308–365; these read MDNVQEHDPDTQEHNNETQNHKQEDHSNSYQ and KEEK…CLIS. Polar residues predominate over residues 340–353; it reads KASNTPRRNKSNTQ.

To yeast YGL082w. As to quaternary structure, interacts with sad1.

It is found in the cytoplasm. This is an uncharacterized protein from Schizosaccharomyces pombe (strain 972 / ATCC 24843) (Fission yeast).